A 396-amino-acid polypeptide reads, in one-letter code: Digeranylgeranylglycerophospholipid reductase 2 (396 aa).

The FAD site is built by Ala13, Glu32, Cys43, Ala44, Gly46, Arg92, Ala116, Asp278, Gly290, and Leu291.

This sequence belongs to the geranylgeranyl reductase family. DGGGPL reductase subfamily. It depends on FAD as a cofactor.

It catalyses the reaction a 2,3-bis-O-phytanyl-sn-glycerol 1-phospholipid + 8 A = a 2,3-bis-O-(geranylgeranyl)-sn-glycerol 1-phospholipid + 8 AH2. The enzyme catalyses 2,3-bis-O-(phytanyl)-sn-glycerol 1-phosphate + 8 A = 2,3-bis-O-(geranylgeranyl)-sn-glycerol 1-phosphate + 8 AH2. The catalysed reaction is CDP-2,3-bis-O-(geranylgeranyl)-sn-glycerol + 8 AH2 = CDP-2,3-bis-O-(phytanyl)-sn-glycerol + 8 A. It carries out the reaction archaetidylserine + 8 AH2 = 2,3-bis-O-phytanyl-sn-glycero-3-phospho-L-serine + 8 A. The protein operates within membrane lipid metabolism; glycerophospholipid metabolism. In terms of biological role, is involved in the reduction of 2,3-digeranylgeranylglycerophospholipids (unsaturated archaeols) into 2,3-diphytanylglycerophospholipids (saturated archaeols) in the biosynthesis of archaeal membrane lipids. Catalyzes the formation of archaetidic acid (2,3-di-O-phytanyl-sn-glyceryl phosphate) from 2,3-di-O-geranylgeranylglyceryl phosphate (DGGGP) via the hydrogenation of each double bond of the isoprenoid chains. Is also probably able to reduce double bonds of geranyl groups in CDP-2,3-bis-O-(geranylgeranyl)-sn-glycerol and archaetidylserine, thus acting at various stages in the biosynthesis of archaeal membrane lipids. The chain is Digeranylgeranylglycerophospholipid reductase 2 from Methanopyrus kandleri (strain AV19 / DSM 6324 / JCM 9639 / NBRC 100938).